Consider the following 816-residue polypeptide: MGDMVVEPATLKPTSEPTPSPSGNNGGSLLSVITEGVGELSVIDPEVAQKACQEVLEKVKLLHGGVAISSKGSPLELVNGDGVDNEIRCLDDPPTEIREEEDEMEPGVVSGTAKGTRRRRQNNSAKQSWLLRLFESKLFDISMAISYLYNSKEPGVQAYIGNRLFCFRNEDVDFYLPQLLNMYIHMDEDVGDAIKPYIVHRCRQSINFSLQCALLLGAYSSDMHISTQRHSRGTKLRKLILSDELKPAHRKRELPTLSPAPDTGLSPSKRTHQRSKSDATASISLSSNLKRTASNPKVENEDEELSSSTESIDNSFSSPVRLAPEREFIKSLMAIGKRLATLPTKEQKTQRLISELSLLNHKLPARVWLPTAGFDHHVVRVPHTQAVVLNSKDKAPYLIYVEVLECENFDTTNVPARIPENRIRSTRSVENLPECGITHEQRAGSFSTVPNYDNDDEAWSVDDIGELQVELPEVHTNSCDNISQFSVDSITSQESKEPVFIAAGDIRRRLSEQLAHTPTAFKRDPEDPSAVALKEPWQEKVRRIREGSPYGHLPNWRLLSVIVKCGDDLRQELLAFQVLKQLQSIWEQERVPLWIKPYKILVISADSGMIEPVVNAVSIHQVKKQSQLSLLDYFLQEHGSYTTEAFLSAQRNFVQSCAGYCLVCYLLQVKDRHNGNILLDAEGHIIHIDFGFILSSSPRNLGFETSAFKLTTEFVDVMGGLNGDMFNYYKMLMLQGLIAARKHMDKVVQIVEIMQQGSQLPCFHGSSTIRNLKERFHMSMTEEQLQLLVEQMVDGSMRSITTKLYDGFQYLTNGIM.

3 disordered regions span residues 1–29 (MGDM…GGSL), 99–121 (EEED…RRRQ), and 250–318 (RKRE…SFSS). N-acetylglycine is present on G2. Residues 2 to 68 (GDMVVEPATL…VKLLHGGVAI (67 aa)) are interaction with ACBD3. The span at 10-29 (TLKPTSEPTPSPSGNNGGSL) shows a compositional bias: low complexity. The PIK helical domain maps to 61–242 (LLHGGVAISS…GTKLRKLILS (182 aa)). S258 carries the post-translational modification Phosphoserine. Residue T263 is modified to Phosphothreonine. Phosphoserine occurs at positions 266, 275, 277, 284, and 294. Composition is skewed to polar residues over residues 278–297 (DATA…SNPK) and 306–318 (SSST…SFSS). Phosphoserine is present on S428. T438 carries the phosphothreonine modification. A Phosphoserine modification is found at S511. 2 positions are modified to phosphothreonine: T517 and T519. In terms of domain architecture, PI3K/PI4K catalytic spans 535–801 (EPWQEKVRRI…MVDGSMRSIT (267 aa)). The tract at residues 541-547 (VRRIREG) is G-loop. The segment at 668–676 (QVKDRHNGN) is catalytic loop. The segment at 687-711 (HIDFGFILSSSPRNLGFETSAFKLT) is activation loop.

Belongs to the PI3/PI4-kinase family. Type III PI4K subfamily. Interacts with ARF1 and ARF3 in the Golgi complex, but not with ARF4, ARF5 or ARF6. Interacts with NCS1/FREQ in a calcium-independent manner. Interacts with CALN1/CABP8 and CALN2/CABP7; in a calcium-dependent manner; this interaction competes with NCS1/FREQ binding. Interacts with ACBD3. Interacts with ARMH3, YWHAB, YWHAE, YWHAG, YWHAH, YWHAQ, YWHAZ and SFN. Interacts with GGA2 (via VHS domain); the interaction is important for PI4KB location at the Golgi apparatus membrane. Interacts with ATG9A. Requires Mg(2+) as cofactor. Mn(2+) is required as a cofactor. Strongly expressed in brain, kidney, lung, small intestine, uterus and adrenal gland. Weaker expression in liver, heart, skeletal muscle, thymus and testis. Not detected in spleen.

Its subcellular location is the golgi apparatus. It localises to the endomembrane system. The protein resides in the mitochondrion outer membrane. It is found in the rough endoplasmic reticulum membrane. The protein localises to the golgi apparatus membrane. The enzyme catalyses a 1,2-diacyl-sn-glycero-3-phospho-(1D-myo-inositol) + ATP = a 1,2-diacyl-sn-glycero-3-phospho-(1D-myo-inositol 4-phosphate) + ADP + H(+). With respect to regulation, inhibited by wortmannin. Increased kinase activity upon interaction with NCS1/FREQ. Phosphorylates phosphatidylinositol (PI) in the first committed step in the production of the second messenger inositol-1,4,5,-trisphosphate (PIP). May regulate Golgi disintegration/reorganization during mitosis, possibly via its phosphorylation. Involved in Golgi-to-plasma membrane trafficking. May play an important role in the inner ear development. The protein is Phosphatidylinositol 4-kinase beta (Pi4kb) of Rattus norvegicus (Rat).